The chain runs to 273 residues: Protein BMH2 (273 aa).

Ser-2 bears the N-acetylserine mark. A disordered region spans residues 236 to 273 (DISESGQEDQQQQQQQQQQQQQQQQQAPAEQTQGEPTK). Residues 245–261 (QQQQQQQQQQQQQQQQQ) are compositionally biased toward low complexity. The span at 262–273 (APAEQTQGEPTK) shows a compositional bias: polar residues.

The protein belongs to the 14-3-3 family. Interacts with NTH1 (via N-terminus when phosphorylated by PKA); the interaction is direct and activates NTH1. Interacts with FIN1.

Its subcellular location is the cytoplasm. It is found in the nucleus. This Saccharomyces cerevisiae (strain ATCC 204508 / S288c) (Baker's yeast) protein is Protein BMH2 (BMH2).